A 562-amino-acid chain; its full sequence is Endoglucanase E1 (562 aa).

Residues 1–41 (MPRALRRVPGSRVMLRVGVVVAVLALVAALANLAVPRPARA) form the signal peptide. Positions 42–400 (AGGGYWHTSG…IKSSIFDPVG (359 aa)) are catalytic. Cysteines 75 and 161 form a disulfide. E203 functions as the Proton donor in the catalytic mechanism. A disulfide bridge links C209 with C212. E323 serves as the catalytic Nucleophile. Residues 399–462 (VGASASPSSQ…PTPSPTAASG (64 aa)) form a disordered region. Composition is skewed to low complexity over residues 401 to 411 (ASASPSSQPSP) and 437 to 449 (PTPT…TPTP). The CBM2 domain maps to 458 to 562 (TAASGARCTA…AAPTVACAAS (105 aa)).

It belongs to the glycosyl hydrolase 5 (cellulase A) family.

The enzyme catalyses Endohydrolysis of (1-&gt;4)-beta-D-glucosidic linkages in cellulose, lichenin and cereal beta-D-glucans.. Has a very high specific activity on carboxymethylcellulose. In Acidothermus cellulolyticus (strain ATCC 43068 / DSM 8971 / 11B), this protein is Endoglucanase E1.